Reading from the N-terminus, the 429-residue chain is MNFSESERLQQLSNEYILGGVNSPSRSYKAVGGGAPVVMKEGHGAYLYDVDGNKFIDYLQAYGPIIAGHAHPHITKAIQEQAAKGVLFGTPTELEIEFSKKLRDAIPSLEKIRFVNSGTEAVMTTIRVARAYTKRNKIIKFAGSYHGHSDLVLVAAGSGPSQLGSPDSAGVPESVAREVITVPFNDINAYKEAIEFWGDEIAAVLVEPIVGNFGMVMPQPGFLEEVNEISHNNGTLVIYDEVITAFRFHYGAAQDLLGVIPDLTAFGKIVGGGLPIGGYGGRQDIMEQVAPLGPAYQAGTMAGNPLSMKAGIALLEVLEQDGVYEKLDSLGQQLEEGLLKLIEKHNITATINRIYGSLTLYFTDEKVTHYDQVEHSDGEAFGKFFKLMLNQGINLAPSKFEAWFLTTEHTEEDIQQTLKAADYAFSQMK.

An N6-(pyridoxal phosphate)lysine modification is found at Lys268.

Belongs to the class-III pyridoxal-phosphate-dependent aminotransferase family. HemL subfamily. Homodimer. Pyridoxal 5'-phosphate is required as a cofactor.

The protein localises to the cytoplasm. It carries out the reaction (S)-4-amino-5-oxopentanoate = 5-aminolevulinate. It functions in the pathway porphyrin-containing compound metabolism; protoporphyrin-IX biosynthesis; 5-aminolevulinate from L-glutamyl-tRNA(Glu): step 2/2. This is Glutamate-1-semialdehyde 2,1-aminomutase 2 from Staphylococcus aureus (strain Mu50 / ATCC 700699).